Here is a 547-residue protein sequence, read N- to C-terminus: Methionine--tRNA ligase (547 aa).

The short motif at 13–23 (PYANGPLHIGH) is the 'HIGH' region element. Residues C145, C148, C158, and C161 each coordinate Zn(2+). The short motif at 334–338 (QFSKS) is the 'KMSKS' region element. K337 contributes to the ATP binding site.

It belongs to the class-I aminoacyl-tRNA synthetase family. MetG type 1 subfamily. It depends on Zn(2+) as a cofactor.

The protein localises to the cytoplasm. It carries out the reaction tRNA(Met) + L-methionine + ATP = L-methionyl-tRNA(Met) + AMP + diphosphate. Its function is as follows. Is required not only for elongation of protein synthesis but also for the initiation of all mRNA translation through initiator tRNA(fMet) aminoacylation. This is Methionine--tRNA ligase from Thermoplasma acidophilum (strain ATCC 25905 / DSM 1728 / JCM 9062 / NBRC 15155 / AMRC-C165).